A 260-amino-acid polypeptide reads, in one-letter code: Trans-aconitate 2-methyltransferase (260 aa).

The protein belongs to the methyltransferase superfamily. Tam family.

Its subcellular location is the cytoplasm. The enzyme catalyses trans-aconitate + S-adenosyl-L-methionine = (E)-3-(methoxycarbonyl)pent-2-enedioate + S-adenosyl-L-homocysteine. Catalyzes the S-adenosylmethionine monomethyl esterification of trans-aconitate. The polypeptide is Trans-aconitate 2-methyltransferase (Paracidovorax citrulli (strain AAC00-1) (Acidovorax citrulli)).